Reading from the N-terminus, the 407-residue chain is Argininosuccinate synthase (407 aa).

ATP-binding positions include 11 to 19 and A39; that span reads AYSGGLDTS. Residues Y90 and S95 each coordinate L-citrulline. G120 contributes to the ATP binding site. T122, N126, and D127 together coordinate L-aspartate. N126 contacts L-citrulline. R130, S179, S188, E264, and Y276 together coordinate L-citrulline.

Belongs to the argininosuccinate synthase family. Type 1 subfamily. As to quaternary structure, homotetramer.

It is found in the cytoplasm. It catalyses the reaction L-citrulline + L-aspartate + ATP = 2-(N(omega)-L-arginino)succinate + AMP + diphosphate + H(+). Its pathway is amino-acid biosynthesis; L-arginine biosynthesis; L-arginine from L-ornithine and carbamoyl phosphate: step 2/3. The polypeptide is Argininosuccinate synthase (Roseiflexus sp. (strain RS-1)).